We begin with the raw amino-acid sequence, 179 residues long: Large ribosomal subunit protein uL6 (179 aa).

It belongs to the universal ribosomal protein uL6 family. Part of the 50S ribosomal subunit.

In terms of biological role, this protein binds to the 23S rRNA, and is important in its secondary structure. It is located near the subunit interface in the base of the L7/L12 stalk, and near the tRNA binding site of the peptidyltransferase center. The sequence is that of Large ribosomal subunit protein uL6 from Prochlorococcus marinus (strain NATL2A).